A 355-amino-acid chain; its full sequence is Tryptophan--tRNA ligase (355 aa).

ATP-binding positions include Q13 to T15 and G21 to N22. The 'HIGH' region signature appears at P14–N22. D137 serves as a coordination point for L-tryptophan. ATP contacts are provided by residues G149 to D151, I208, and K217 to S221. The short motif at K217–S221 is the 'KMSKS' region element.

This sequence belongs to the class-I aminoacyl-tRNA synthetase family. Homodimer.

The protein resides in the cytoplasm. The catalysed reaction is tRNA(Trp) + L-tryptophan + ATP = L-tryptophyl-tRNA(Trp) + AMP + diphosphate + H(+). Catalyzes the attachment of tryptophan to tRNA(Trp). In Brucella melitensis biotype 1 (strain ATCC 23456 / CCUG 17765 / NCTC 10094 / 16M), this protein is Tryptophan--tRNA ligase.